The chain runs to 311 residues: Light-independent protochlorophyllide reductase iron-sulfur ATP-binding protein (311 aa).

ATP-binding positions include 10 to 15 and K39; that span reads GIGKST. Position 14 (S14) interacts with Mg(2+). C95 and C129 together coordinate [4Fe-4S] cluster. 180–181 lines the ATP pocket; that stretch reads NR.

It belongs to the NifH/BchL/ChlL family. As to quaternary structure, homodimer. Protochlorophyllide reductase is composed of three subunits; ChlL, ChlN and ChlB. Requires [4Fe-4S] cluster as cofactor.

It localises to the plastid. The protein localises to the chloroplast. It carries out the reaction chlorophyllide a + oxidized 2[4Fe-4S]-[ferredoxin] + 2 ADP + 2 phosphate = protochlorophyllide a + reduced 2[4Fe-4S]-[ferredoxin] + 2 ATP + 2 H2O. The protein operates within porphyrin-containing compound metabolism; chlorophyll biosynthesis (light-independent). Functionally, component of the dark-operative protochlorophyllide reductase (DPOR) that uses Mg-ATP and reduced ferredoxin to reduce ring D of protochlorophyllide (Pchlide) to form chlorophyllide a (Chlide). This reaction is light-independent. The L component serves as a unique electron donor to the NB-component of the complex, and binds Mg-ATP. This Oltmannsiellopsis viridis (Marine flagellate) protein is Light-independent protochlorophyllide reductase iron-sulfur ATP-binding protein.